Consider the following 448-residue polypeptide: Adenylosuccinate synthetase (448 aa).

GTP-binding positions include 36 to 42 (GDEGKGK) and 64 to 66 (GHT). D37 (proton acceptor) is an active-site residue. Mg(2+)-binding residues include D37 and G64. IMP is bound by residues 37–40 (DEGK), 62–65 (NAGH), T154, R168, N246, T261, and R325. Residue H65 is the Proton donor of the active site. 321 to 327 (VTTKRKR) serves as a coordination point for substrate. Residues R327, 353 to 355 (KLD), and 436 to 438 (GVG) each bind GTP.

This sequence belongs to the adenylosuccinate synthetase family. Homodimer. Mg(2+) serves as cofactor.

Its subcellular location is the cytoplasm. The enzyme catalyses IMP + L-aspartate + GTP = N(6)-(1,2-dicarboxyethyl)-AMP + GDP + phosphate + 2 H(+). Its pathway is purine metabolism; AMP biosynthesis via de novo pathway; AMP from IMP: step 1/2. Functionally, plays an important role in the de novo pathway and in the salvage pathway of purine nucleotide biosynthesis. Catalyzes the first committed step in the biosynthesis of AMP from IMP. This chain is Adenylosuccinate synthetase, found in Drosophila mojavensis (Fruit fly).